The primary structure comprises 31 residues: Photosystem I reaction center subunit XII (31 aa).

A helical transmembrane segment spans residues 7–26 (QIYIALLTALIPAFFALKLG).

It belongs to the PsaM family.

Its subcellular location is the plastid. The protein resides in the chloroplast thylakoid membrane. The protein is Photosystem I reaction center subunit XII of Euglena mutabilis.